We begin with the raw amino-acid sequence, 490 residues long: Katanin p60 ATPase-containing subunit A-like 1 (490 aa).

M1 is subject to N-acetylmethionine. The segment at 95–178 (DPAVWPPPVP…MQDGASDGDI (84 aa)) is disordered. Residues 116 to 127 (PNREVRPLRKDV) are compositionally biased toward basic and acidic residues. The segment covering 128-139 (AGVGARGPVGRA) has biased composition (low complexity). Basic and acidic residues predominate over residues 143 to 169 (SKSEKPSTNKDKDYRARGRDDKGRKNM). Position 174 is a phosphoserine (S174). 248–255 (GPPGTGKT) contacts ATP.

This sequence belongs to the AAA ATPase family. Katanin p60 subunit A1 subfamily. A-like 1 sub-subfamily. As to quaternary structure, interacts with KATNB1 and KATNBL1.

It localises to the cytoplasm. The protein resides in the cytoskeleton. Its subcellular location is the spindle pole. It is found in the spindle. The catalysed reaction is n ATP + n H2O + a microtubule = n ADP + n phosphate + (n+1) alpha/beta tubulin heterodimers.. Its function is as follows. Regulates microtubule dynamics in Sertoli cells, a process that is essential for spermiogenesis and male fertility. Severs microtubules in an ATP-dependent manner, promoting rapid reorganization of cellular microtubule arrays. Has microtubule-severing activity in vitro. This Sorex araneus (Eurasian common shrew) protein is Katanin p60 ATPase-containing subunit A-like 1.